Reading from the N-terminus, the 598-residue chain is Arginine--tRNA ligase (598 aa).

A 'HIGH' region motif is present at residues Ala-139 to His-149.

Belongs to the class-I aminoacyl-tRNA synthetase family. In terms of assembly, monomer.

Its subcellular location is the cytoplasm. The enzyme catalyses tRNA(Arg) + L-arginine + ATP = L-arginyl-tRNA(Arg) + AMP + diphosphate. The chain is Arginine--tRNA ligase from Bradyrhizobium sp. (strain BTAi1 / ATCC BAA-1182).